Here is a 397-residue protein sequence, read N- to C-terminus: Enoyl-[acyl-carrier-protein] reductase [NADH] (397 aa).

Residues 48–53 (GASTGY), 74–75 (FE), 111–112 (DA), and 139–140 (VA) each bind NAD(+). Y225 contacts substrate. Y235 serves as the catalytic Proton donor. NAD(+)-binding positions include K244 and 273 to 275 (VVT).

The protein belongs to the TER reductase family. In terms of assembly, monomer.

It catalyses the reaction a 2,3-saturated acyl-[ACP] + NAD(+) = a (2E)-enoyl-[ACP] + NADH + H(+). It participates in lipid metabolism; fatty acid biosynthesis. Involved in the final reduction of the elongation cycle of fatty acid synthesis (FAS II). Catalyzes the reduction of a carbon-carbon double bond in an enoyl moiety that is covalently linked to an acyl carrier protein (ACP). The protein is Enoyl-[acyl-carrier-protein] reductase [NADH] of Burkholderia pseudomallei (strain 668).